The primary structure comprises 410 residues: D-amino acid dehydrogenase (410 aa).

9–14 (GGGIVG) serves as a coordination point for FAD.

It belongs to the DadA oxidoreductase family. FAD is required as a cofactor.

Its subcellular location is the cell inner membrane. The catalysed reaction is a D-alpha-amino acid + a quinone + H2O = a 2-oxocarboxylate + a quinol + NH4(+). Catalyzes the oxidative deamination of D-amino acids. Has broad substrate specificity; is mostly active on D-proline, and to a lesser extent, on several other D-amino acids such as D-alanine, D-phenylalanine and D-serine. Mediates electron transport from D-proline to coenzyme Q1 in vitro, and is involved in the electron transport chain from D-proline to the c-type cytochrome in vivo. In Helicobacter pylori (strain ATCC 700392 / 26695) (Campylobacter pylori), this protein is D-amino acid dehydrogenase.